A 157-amino-acid chain; its full sequence is Peptide methionine sulfoxide reductase MsrA (157 aa).

Cys10 is a catalytic residue.

This sequence belongs to the MsrA Met sulfoxide reductase family.

The enzyme catalyses L-methionyl-[protein] + [thioredoxin]-disulfide + H2O = L-methionyl-(S)-S-oxide-[protein] + [thioredoxin]-dithiol. It carries out the reaction [thioredoxin]-disulfide + L-methionine + H2O = L-methionine (S)-S-oxide + [thioredoxin]-dithiol. Has an important function as a repair enzyme for proteins that have been inactivated by oxidation. Catalyzes the reversible oxidation-reduction of methionine sulfoxide in proteins to methionine. The polypeptide is Peptide methionine sulfoxide reductase MsrA (Clostridium perfringens (strain 13 / Type A)).